The sequence spans 123 residues: MPTINQLIRHERKKVVKRKKTPALQGCPQRRGVCTRVYTTTPKKPNSALRKVARVRLTNGLEVTAYIPGEGHNLQEHSVVLIRGGRVKDLPGVRYHIIRGTLDTSGVQDRRQRRSKYGAKRPK.

Aspartate 89 bears the 3-methylthioaspartic acid mark. The interval 102–123 (LDTSGVQDRRQRRSKYGAKRPK) is disordered. The segment covering 111–123 (RQRRSKYGAKRPK) has biased composition (basic residues).

Belongs to the universal ribosomal protein uS12 family. As to quaternary structure, part of the 30S ribosomal subunit. Contacts proteins S8 and S17. May interact with IF1 in the 30S initiation complex.

Functionally, with S4 and S5 plays an important role in translational accuracy. Interacts with and stabilizes bases of the 16S rRNA that are involved in tRNA selection in the A site and with the mRNA backbone. Located at the interface of the 30S and 50S subunits, it traverses the body of the 30S subunit contacting proteins on the other side and probably holding the rRNA structure together. The combined cluster of proteins S8, S12 and S17 appears to hold together the shoulder and platform of the 30S subunit. This is Small ribosomal subunit protein uS12 from Lawsonia intracellularis (strain PHE/MN1-00).